The sequence spans 92 residues: DNA-directed RNA polymerase subunit omega (92 aa).

This sequence belongs to the RNA polymerase subunit omega family. In terms of assembly, the RNAP catalytic core consists of 2 alpha, 1 beta, 1 beta' and 1 omega subunit. When a sigma factor is associated with the core the holoenzyme is formed, which can initiate transcription.

The catalysed reaction is RNA(n) + a ribonucleoside 5'-triphosphate = RNA(n+1) + diphosphate. Functionally, promotes RNA polymerase assembly. Latches the N- and C-terminal regions of the beta' subunit thereby facilitating its interaction with the beta and alpha subunits. The polypeptide is DNA-directed RNA polymerase subunit omega (Shewanella amazonensis (strain ATCC BAA-1098 / SB2B)).